A 130-amino-acid polypeptide reads, in one-letter code: Small ribosomal subunit protein uS8 (130 aa).

It belongs to the universal ribosomal protein uS8 family. As to quaternary structure, part of the 30S ribosomal subunit. Contacts proteins S5 and S12.

One of the primary rRNA binding proteins, it binds directly to 16S rRNA central domain where it helps coordinate assembly of the platform of the 30S subunit. In Aliivibrio salmonicida (strain LFI1238) (Vibrio salmonicida (strain LFI1238)), this protein is Small ribosomal subunit protein uS8.